A 398-amino-acid polypeptide reads, in one-letter code: Lysophosphatidylserine lipase ABHD12 (398 aa).

The Cytoplasmic portion of the chain corresponds to M1–K74. A helical transmembrane segment spans residues I75–G95. At I96–H398 the chain is on the extracellular side. N-linked (GlcNAc...) asparagine glycosylation is present at N123. The active-site Nucleophile is S246. Catalysis depends on charge relay system residues D333 and H372.

Belongs to the serine esterase family.

The protein localises to the endoplasmic reticulum membrane. The enzyme catalyses 1-(9Z-octadecenoyl)-sn-glycero-3-phospho-L-serine + H2O = sn-glycero-3-phospho-L-serine + (9Z)-octadecenoate + H(+). The catalysed reaction is 1-(9Z-octadecenoyl)-sn-glycero-3-phospho-(1'-sn-glycerol) + H2O = sn-glycero-3-phospho-(1'-sn-glycerol) + (9Z)-octadecenoate + H(+). It carries out the reaction 1-(9Z-octadecenoyl)-sn-glycero-3-phospho-(1D-myo-inositol) + H2O = sn-glycero-3-phospho-1D-myo-inositol + (9Z)-octadecenoate + H(+). It catalyses the reaction 1-(9Z-octadecenoyl)-sn-glycero-3-phosphoethanolamine + H2O = sn-glycero-3-phosphoethanolamine + (9Z)-octadecenoate + H(+). The enzyme catalyses 1-(9Z-octadecenoyl)-sn-glycero-3-phosphocholine + H2O = 1-(9Z-octadecenoyl)-sn-glycerol + phosphocholine + H(+). The catalysed reaction is 2-(9Z-octadecenoyl)-glycerol + H2O = glycerol + (9Z)-octadecenoate + H(+). It carries out the reaction 1-hexadecanoyl-sn-glycero-3-phospho-L-serine + H2O = sn-glycero-3-phospho-L-serine + hexadecanoate + H(+). It catalyses the reaction 2-(5Z,8Z,11Z,14Z-eicosatetraenoyl)-glycerol + H2O = glycerol + (5Z,8Z,11Z,14Z)-eicosatetraenoate + H(+). The enzyme catalyses Hydrolyzes glycerol monoesters of long-chain fatty acids.. The catalysed reaction is 1-decanoylglycerol + H2O = decanoate + glycerol + H(+). It carries out the reaction 1-dodecanoylglycerol + H2O = dodecanoate + glycerol + H(+). It catalyses the reaction 1-tetradecanoylglycerol + H2O = tetradecanoate + glycerol + H(+). The enzyme catalyses 2-hexadecanoylglycerol + H2O = glycerol + hexadecanoate + H(+). The catalysed reaction is 1-(9Z-octadecenoyl)-glycerol + H2O = glycerol + (9Z)-octadecenoate + H(+). It carries out the reaction 2-(9Z,12Z-octadecadienoyl)-glycerol + H2O = (9Z,12Z)-octadecadienoate + glycerol + H(+). It catalyses the reaction 1-(5Z,8Z,11Z,14Z-eicosatetraenoyl)-glycerol + H2O = glycerol + (5Z,8Z,11Z,14Z)-eicosatetraenoate + H(+). The enzyme catalyses 1-(9Z,12Z-octadecadienoyl)-glycerol + H2O = (9Z,12Z)-octadecadienoate + glycerol + H(+). The catalysed reaction is 1-hexadecanoylglycerol + H2O = glycerol + hexadecanoate + H(+). It carries out the reaction 1-octadecanoylglycerol + H2O = octadecanoate + glycerol + H(+). It catalyses the reaction 1-octadecanoyl-2-(9,10-epoxyoctadecanoyl)-sn-glycero-3-phospho-L-serine + H2O = 9,10-epoxyoctadecanoate + 1-octadecanoyl-sn-glycero-3-phosphoserine + H(+). The enzyme catalyses 1-octadecanoyl-2-(10-hydroxyoctadecanoyl)-sn-glycero-3-phospho-L-serine + H2O = 1-octadecanoyl-sn-glycero-3-phosphoserine + 10-hydroxyoctadecanoate + H(+). The catalysed reaction is 1-hexadecanoyl-2-(10-hydroxyoctadecanoyl)-sn-glycero-3-phospho-L-serine + H2O = 10-hydroxyoctadecanoate + 1-hexadecanoyl-sn-glycero-3-phospho-L-serine + H(+). Lysophosphatidylserine (LPS) lipase that mediates the hydrolysis of lysophosphatidylserine, a class of signaling lipids that regulates immunological and neurological processes. Represents a major lysophosphatidylserine lipase in the brain, thereby playing a key role in the central nervous system. Also able to hydrolyze oxidized phosphatidylserine; oxidized phosphatidylserine is produced in response to severe inflammatory stress and constitutes a proapoptotic 'eat me' signal. Also has monoacylglycerol (MAG) lipase activity: hydrolyzes 2-arachidonoylglycerol (2-AG), thereby acting as a regulator of endocannabinoid signaling pathways. Has a strong preference for very-long-chain lipid substrates; substrate specificity is likely due to improved catalysis and not improved substrate binding. The chain is Lysophosphatidylserine lipase ABHD12 from Macaca fascicularis (Crab-eating macaque).